The primary structure comprises 362 residues: Phosphoserine aminotransferase (362 aa).

S9 and R42 together coordinate L-glutamate. Pyridoxal 5'-phosphate-binding positions include 76 to 77 (GR), W102, T153, D174, and Q197. The residue at position 198 (K198) is an N6-(pyridoxal phosphate)lysine. A pyridoxal 5'-phosphate-binding site is contributed by 239 to 240 (NT).

Belongs to the class-V pyridoxal-phosphate-dependent aminotransferase family. SerC subfamily. In terms of assembly, homodimer. Requires pyridoxal 5'-phosphate as cofactor.

It is found in the cytoplasm. It carries out the reaction O-phospho-L-serine + 2-oxoglutarate = 3-phosphooxypyruvate + L-glutamate. The enzyme catalyses 4-(phosphooxy)-L-threonine + 2-oxoglutarate = (R)-3-hydroxy-2-oxo-4-phosphooxybutanoate + L-glutamate. The protein operates within amino-acid biosynthesis; L-serine biosynthesis; L-serine from 3-phospho-D-glycerate: step 2/3. It participates in cofactor biosynthesis; pyridoxine 5'-phosphate biosynthesis; pyridoxine 5'-phosphate from D-erythrose 4-phosphate: step 3/5. In terms of biological role, catalyzes the reversible conversion of 3-phosphohydroxypyruvate to phosphoserine and of 3-hydroxy-2-oxo-4-phosphonooxybutanoate to phosphohydroxythreonine. This is Phosphoserine aminotransferase from Salmonella agona (strain SL483).